A 942-amino-acid polypeptide reads, in one-letter code: Isoleucine--tRNA ligase (942 aa).

The 'HIGH' region motif lies at P58–H68. Position 566 (E566) interacts with L-isoleucyl-5'-AMP. The 'KMSKS' region motif lies at K607–S611. An ATP-binding site is contributed by K610. The Zn(2+) site is built by C905, C908, C925, and C928.

This sequence belongs to the class-I aminoacyl-tRNA synthetase family. IleS type 1 subfamily. As to quaternary structure, monomer. Requires Zn(2+) as cofactor.

It localises to the cytoplasm. The catalysed reaction is tRNA(Ile) + L-isoleucine + ATP = L-isoleucyl-tRNA(Ile) + AMP + diphosphate. Functionally, catalyzes the attachment of isoleucine to tRNA(Ile). As IleRS can inadvertently accommodate and process structurally similar amino acids such as valine, to avoid such errors it has two additional distinct tRNA(Ile)-dependent editing activities. One activity is designated as 'pretransfer' editing and involves the hydrolysis of activated Val-AMP. The other activity is designated 'posttransfer' editing and involves deacylation of mischarged Val-tRNA(Ile). The sequence is that of Isoleucine--tRNA ligase from Vibrio parahaemolyticus serotype O3:K6 (strain RIMD 2210633).